The chain runs to 307 residues: MDDFISISLLSLAMLVGCYVAGIIPLAVNFSEERLKLVTVLGAGLLCGTALAVIVPEGVHALYEDILEGKHHQASETHNVIASDKAAEKSVVHEHEHSHDHTQLHAYIGVSLVLGFVFMLLVDQIGNSHVHSTDDPEAARSSNSKITTTLGLVVHAAADGVALGAAASTSQTSVQLIVFVAIMLHKAPAAFGLVSFLMHAGLERNRIRKHLLVFALAAPVMSMVTYLGLSKSSKEALSEVNATGVAMLFSAGTFLYVATVHVLPEVGGIGHSHKPDATGGRGLSRLEVAALVLGCLIPLILSVGHQH.

Residues 4-24 form a helical membrane-spanning segment; sequence FISISLLSLAMLVGCYVAGII. Asn-29 is a glycosylation site (N-linked (GlcNAc...) asparagine). A run of 5 helical transmembrane segments spans residues 35–55, 106–126, 146–166, 176–196, and 210–230; these read LKLVTVLGAGLLCGTALAVIV, AYIGVSLVLGFVFMLLVDQIG, ITTTLGLVVHAAADGVALGAA, LIVFVAIMLHKAPAAFGLVSF, and HLLVFALAAPVMSMVTYLGLS. N-linked (GlcNAc...) asparagine glycosylation is present at Asn-241. 2 helical membrane-spanning segments follow: residues 244–264 and 286–306; these read GVAMLFSAGTFLYVATVHVLP and LEVAALVLGCLIPLILSVGHQ.

It belongs to the ZIP transporter (TC 2.A.5) family. In terms of tissue distribution, highly expressed in pancreas, testis, and pituitary and moderately in the kidney, liver, uterus, heart, prostate, and brain, whereas expression is lower in the ovary and colon.

It is found in the golgi apparatus. The protein localises to the trans-Golgi network membrane. It localises to the cell membrane. The protein resides in the cytoplasm. Its subcellular location is the perinuclear region. It is found in the mitochondrion. The protein localises to the nucleus. It catalyses the reaction Zn(2+)(in) = Zn(2+)(out). Functionally, transports zinc ions across cell and organelle membranes into the cytoplasm and regulates intracellular zinc homeostasis. Participates in the zinc ions efflux out of the secretory compartments. Regulates intracellular zinc level, resulting in the enhancement of AKT1 and MAPK3/MAPK1 (Erk1/2) phosphorylation in response to the BCR activation. Also functions as a membrane androgen receptor that mediates, through a G protein, the non-classical androgen signaling pathway, characterized by the activation of MAPK3/MAPK1 (Erk1/2) and transcription factors CREB1 or ATF1. This pathway contributes to CLDN1 and CLDN5 expression and tight junction formation between adjacent Sertoli cells. Mediates androgen-induced vascular endothelial cell proliferation through activation of an inhibitory G protein leading to the AKT1 and MAPK3/MAPK1 (Erk1/2) activation which in turn modulate inhibition (phosphorylation) of GSK3B and CCND1 transcription. Moreover, has dual functions as a membrane-bound androgen receptor and as an androgen-dependent zinc transporter both of which are mediated through an inhibitory G protein (Gi) that mediates both MAP kinase and zinc signaling leading to the androgen-dependent apoptotic process. This Homo sapiens (Human) protein is Zinc transporter ZIP9.